Reading from the N-terminus, the 154-residue chain is Probable transcription factor At4g00232 (154 aa).

The interval 1 to 44 (MDKANTNRSKVCGGSGEAKLTGKKRKNVSAKQSKKDAKKENSQM) is disordered.

The protein belongs to the GeBP family.

The sequence is that of Probable transcription factor At4g00232 from Arabidopsis thaliana (Mouse-ear cress).